Consider the following 85-residue polypeptide: Conotoxin Cap15b (85 aa).

Residues 1-23 (MEKLTFLILVATVLLTIHVLVQS) form the signal peptide. Positions 24–49 (DGDKHLKRRPKQYATKRLSALMRGHR) are excised as a propeptide. Q50 carries the pyrrolidone carboxylic acid modification.

Belongs to the conotoxin O2 superfamily. Contains 4 disulfide bonds. Expressed by the venom duct.

It is found in the secreted. This is Conotoxin Cap15b from Conus capitaneus (Captain cone).